The chain runs to 730 residues: Synaptogenesis protein syg-1 (730 aa).

Positions 1 to 18 (MVRWQTWPLLLLFQLVTC) are cleaved as a signal peptide. Topologically, residues 19-551 (QQLQQRIVEA…WIVITAKFDR (533 aa)) are extracellular. Ig-like domains follow at residues 23 to 123 (QRIV…AKLT), 131 to 265 (PKIV…VKLS), 270 to 352 (PQIN…IKLN), 357 to 433 (ARIM…QILS), and 441 to 540 (PPTV…RNIL). Intrachain disulfides connect Cys44-Cys104, Cys152-Cys246, Cys292-Cys336, Cys378-Cys420, and Cys462-Cys519. 2 N-linked (GlcNAc...) asparagine glycosylation sites follow: Asn93 and Asn206. Residues 552–572 (MVALAIISAGVLLVSLLCCLC) traverse the membrane as a helical segment. The Cytoplasmic segment spans residues 573 to 730 (MCRSNCRSRK…RPISRTSTHV (158 aa)).

It belongs to the immunoglobulin superfamily. In terms of assembly, interacts with skr-1. Interacts with syg-2. Interacts with the WAVE regulatory complex; the interaction leads to formation of a synaptic F-actin network that is required for synapse formation and axon branching. In terms of tissue distribution, expression in head motor neurons, occasionally in HSN neurons and weakly in other cells in the vulval region. Expressed in the primary synapse region of HSNL motor neuron.

The protein localises to the cell membrane. Its subcellular location is the cell projection. It is found in the axon. The protein resides in the synapse. Functionally, cell adhesion protein. Involved in synapse formation in the HSNL egg-laying motor neuron. Inhibits assembly of the SCF(sel-10) E3 ubiquitin ligase complex at synapses, and protects them from elimination. Also required for F-actin assembly at the synaptic region and for axon branch formation. The chain is Synaptogenesis protein syg-1 from Caenorhabditis elegans.